The sequence spans 471 residues: MNFLEIKGLRVFYPESSYSLNVDSLEVKEGETILIAGKSGSGKSTLLNSINGVIPHEIEVEEEGEVKVFGINVRNSTIQQIARFVGTLLQDPDSQIFNYYVIEELAFGAENLNIPREEILYRINKVSQIVGISHLLNKETFRLSGGEKQRVVLGSILIMNPKALILDEPTSSIDLKGTKEILTTLRGLKEKMSMIIAEHKINKVLEFVDRIIILDKGKIIYDIKRDHVKEVDFEDLGLEPLRPSPLPKKRRDGEVILEAKVKVTDGNRTIVDTEIVLRKGISALIGDNGSGKSTLLKALAGILPINLKFYGSIKVEGKEISKLPVEKRGEIIAYLPQEIDLMFTKKTVKEEVSYPAKVRKKYDERVIKELLKRFNLPEDRDPFLLSVGQKRRVAISSLLATGVKVFLLDEPTTGQDWYNRKMLGEELRSIDATFLVVTHDPLFVYYYADRVYKMVNGRVIPISPEDVIKDW.

2 ABC transporter domains span residues 4 to 241 and 255 to 470; these read LEIK…LEPL and VILE…VIKD. ATP is bound by residues 37–44 and 286–293; these read GKSGSGKS and GDNGSGKS.

Belongs to the ABC transporter superfamily.

Its subcellular location is the cell membrane. Functionally, probably part of an ABC transporter complex. Responsible for energy coupling to the transport system. This Sulfurisphaera tokodaii (strain DSM 16993 / JCM 10545 / NBRC 100140 / 7) (Sulfolobus tokodaii) protein is Putative ABC transporter ATP-binding protein STK_11360.